A 328-amino-acid polypeptide reads, in one-letter code: Homoarginine-6-hydroxylase 2-ODD-233 (328 aa).

The Fe2OG dioxygenase domain maps to phenylalanine 183–asparagine 288. 3 residues coordinate Fe cation: histidine 210, aspartate 212, and histidine 268. Residue arginine 278 coordinates 2-oxoglutarate.

The protein belongs to the iron/ascorbate-dependent oxidoreductase family. It depends on Fe(2+) as a cofactor. The cofactor is L-ascorbate. Expressed in roots and shoots.

The protein resides in the cytoplasm. The catalysed reaction is L-homoarginine + 2-oxoglutarate + O2 = 6-hydroxy-L-homoarginine + succinate + CO2. It catalyses the reaction melatonin + 2-oxoglutarate + O2 = 2-hydroxymelatonin + succinate + CO2. Functionally, 2-oxoglutarate-dependent dioxygenase catalyzing homoarginine 6-hydroxylation thus producing 6-hydroxy-L-homoarginine. Guanidine (Gd) is in turn synthesized by the spontaneous conversion of 6-hydroxy-L-homoarginine to (S)-2-amino-6-oxohexanoate (RHEA:79843); guanidine is a nitrogen-rich compound that can serve as a defense or signaling substance. Involved in melatonin degradation. Catalyzes the hydroxylation of melatonin to produce 2-hydroxymelatonin. The polypeptide is Homoarginine-6-hydroxylase 2-ODD-233 (Oryza sativa subsp. japonica (Rice)).